The following is a 213-amino-acid chain: Insulin-like peptide INSL6 (213 aa).

The first 20 residues, 1–20, serve as a signal peptide directing secretion; sequence MPRLLRLSLLWLGLLLVRFS. Intrachain disulfides connect cysteine 33-cysteine 179, cysteine 45-cysteine 192, and cysteine 178-cysteine 183. Positions 55–168 are cleaved as a propeptide — connecting peptide; the sequence is FEEETPFSRL…SNLFWGHHPQ (114 aa). Positions 201–213 are excised as a propeptide; it reads LKEKRSSLVTKIY.

It belongs to the insulin family. In terms of tissue distribution, testis specific.

It is found in the secreted. Functionally, may have a role in sperm development and fertilization. This Homo sapiens (Human) protein is Insulin-like peptide INSL6 (INSL6).